The chain runs to 388 residues: Succinate--CoA ligase [ADP-forming] subunit beta (388 aa).

Positions 9–244 constitute an ATP-grasp domain; it reads KQLFARSGLP…QSQEDPREAQ (236 aa). ATP-binding positions include Lys-46, 53–55, Glu-99, Thr-102, and Glu-107; that span reads GRG. Residues Asn-199 and Asp-213 each coordinate Mg(2+). Substrate-binding positions include Asn-264 and 321–323; that span reads GIV.

This sequence belongs to the succinate/malate CoA ligase beta subunit family. In terms of assembly, heterotetramer of two alpha and two beta subunits. Requires Mg(2+) as cofactor.

The catalysed reaction is succinate + ATP + CoA = succinyl-CoA + ADP + phosphate. It carries out the reaction GTP + succinate + CoA = succinyl-CoA + GDP + phosphate. Its pathway is carbohydrate metabolism; tricarboxylic acid cycle; succinate from succinyl-CoA (ligase route): step 1/1. Succinyl-CoA synthetase functions in the citric acid cycle (TCA), coupling the hydrolysis of succinyl-CoA to the synthesis of either ATP or GTP and thus represents the only step of substrate-level phosphorylation in the TCA. The beta subunit provides nucleotide specificity of the enzyme and binds the substrate succinate, while the binding sites for coenzyme A and phosphate are found in the alpha subunit. The sequence is that of Succinate--CoA ligase [ADP-forming] subunit beta from Cronobacter sakazakii (strain ATCC BAA-894) (Enterobacter sakazakii).